The primary structure comprises 112 residues: Urocortin-2 (112 aa).

The first 22 residues, 1–22 (MTRCALLLLMVLMLGRVLVVPV), serve as a signal peptide directing secretion. Positions 23–70 (TPIPTFQLRPQNSPQTTPRPAASESPSAAPTWPWAAQSHCSPTRHPGS) are excised as a propeptide. The disordered stretch occupies residues 27-66 (TFQLRPQNSPQTTPRPAASESPSAAPTWPWAAQSHCSPTR). Residues 38–58 (TTPRPAASESPSAAPTWPWAA) are compositionally biased toward low complexity.

It belongs to the sauvagine/corticotropin-releasing factor/urotensin I family. Binds with high affinity to CRF receptors 2-alpha and 2-beta. In terms of processing, glycosylated.

It is found in the secreted. Its function is as follows. Suppresses food intake, delays gastric emptying and decreases heat-induced edema. Might represent an endogenous ligand for maintaining homeostasis after stress. The protein is Urocortin-2 (UCN2) of Homo sapiens (Human).